A 186-amino-acid chain; its full sequence is Elongation factor P (186 aa).

It belongs to the elongation factor P family.

The protein resides in the cytoplasm. The protein operates within protein biosynthesis; polypeptide chain elongation. Functionally, involved in peptide bond synthesis. Stimulates efficient translation and peptide-bond synthesis on native or reconstituted 70S ribosomes in vitro. Probably functions indirectly by altering the affinity of the ribosome for aminoacyl-tRNA, thus increasing their reactivity as acceptors for peptidyl transferase. The polypeptide is Elongation factor P (Shewanella halifaxensis (strain HAW-EB4)).